The primary structure comprises 205 residues: Large ribosomal subunit protein uL4 (205 aa).

A disordered region spans residues 56–78 (ISGTTAKPYRQKHTGRARQGSLR).

This sequence belongs to the universal ribosomal protein uL4 family. In terms of assembly, part of the 50S ribosomal subunit.

Functionally, one of the primary rRNA binding proteins, this protein initially binds near the 5'-end of the 23S rRNA. It is important during the early stages of 50S assembly. It makes multiple contacts with different domains of the 23S rRNA in the assembled 50S subunit and ribosome. In terms of biological role, forms part of the polypeptide exit tunnel. This is Large ribosomal subunit protein uL4 from Ehrlichia canis (strain Jake).